A 320-amino-acid chain; its full sequence is Ferrochelatase (320 aa).

Residues His194 and Glu275 each contribute to the Fe cation site.

Belongs to the ferrochelatase family. Monomer.

It localises to the cytoplasm. It catalyses the reaction heme b + 2 H(+) = protoporphyrin IX + Fe(2+). Its pathway is porphyrin-containing compound metabolism; protoheme biosynthesis; protoheme from protoporphyrin-IX: step 1/1. Functionally, catalyzes the ferrous insertion into protoporphyrin IX. The sequence is that of Ferrochelatase from Escherichia coli O127:H6 (strain E2348/69 / EPEC).